Consider the following 637-residue polypeptide: Chaperone protein HtpG (637 aa).

The interval 1 to 335 is a; substrate-binding; sequence MQGTVNSERL…SSDLPLNISR (335 aa). Positions 336 to 559 are b; that stretch reads ETLQNNKIIE…DGSMDIRMER (224 aa). The tract at residues 560 to 637 is c; the sequence is FLREQKQLNY…RMNNVLSQIN (78 aa).

Belongs to the heat shock protein 90 family. As to quaternary structure, homodimer.

It is found in the cytoplasm. In terms of biological role, molecular chaperone. Has ATPase activity. In Ehrlichia ruminantium (strain Welgevonden), this protein is Chaperone protein HtpG.